Reading from the N-terminus, the 316-residue chain is Pantothenate kinase (316 aa).

Gly95–Ser102 contributes to the ATP binding site.

It belongs to the prokaryotic pantothenate kinase family.

It is found in the cytoplasm. The catalysed reaction is (R)-pantothenate + ATP = (R)-4'-phosphopantothenate + ADP + H(+). Its pathway is cofactor biosynthesis; coenzyme A biosynthesis; CoA from (R)-pantothenate: step 1/5. In Shewanella sp. (strain MR-4), this protein is Pantothenate kinase.